Reading from the N-terminus, the 88-residue chain is Beta-defensin 115 (88 aa).

A signal peptide spans Met1–Ala27. 3 disulfides stabilise this stretch: Cys38-Cys65, Cys45-Cys59, and Cys49-Cys66.

It belongs to the beta-defensin family.

It is found in the secreted. Functionally, has antibacterial activity. The chain is Beta-defensin 115 (DEFB115) from Homo sapiens (Human).